We begin with the raw amino-acid sequence, 596 residues long: Elongation factor 4 (596 aa).

A tr-type G domain is found at 2–184 (SHIRNFSIIA…RLVHTIPAPE (183 aa)). GTP is bound by residues 14 to 19 (DHGKST) and 131 to 134 (NKMD).

This sequence belongs to the TRAFAC class translation factor GTPase superfamily. Classic translation factor GTPase family. LepA subfamily.

It is found in the cell inner membrane. The catalysed reaction is GTP + H2O = GDP + phosphate + H(+). Required for accurate and efficient protein synthesis under certain stress conditions. May act as a fidelity factor of the translation reaction, by catalyzing a one-codon backward translocation of tRNAs on improperly translocated ribosomes. Back-translocation proceeds from a post-translocation (POST) complex to a pre-translocation (PRE) complex, thus giving elongation factor G a second chance to translocate the tRNAs correctly. Binds to ribosomes in a GTP-dependent manner. This is Elongation factor 4 from Pseudomonas putida (strain GB-1).